We begin with the raw amino-acid sequence, 396 residues long: Probable sugar efflux transporter (396 aa).

12 helical membrane-spanning segments follow: residues 15-35 (VVTL…PVGL), 50-70 (VGIM…PFML), 81-101 (LICL…AWNF), 103-123 (VLVI…SITA), 136-156 (AQAL…GLPI), 169-189 (TFFA…KLLP), 209-229 (PALM…YTAY), 246-266 (FATV…LVFG), 275-295 (SLVS…LPAA), 301-321 (LAIL…GMQV), 333-353 (VAMA…ALVG), and 364-384 (AIGY…VLIF).

It belongs to the major facilitator superfamily. SotB (TC 2.A.1.2) family.

The protein resides in the cell inner membrane. Its function is as follows. Involved in the efflux of sugars. The physiological role may be the reduction of the intracellular concentration of toxic sugars or sugar metabolites. This chain is Probable sugar efflux transporter, found in Salmonella agona (strain SL483).